An 860-amino-acid chain; its full sequence is Leucine--tRNA ligase (860 aa).

Residues 42–52 (PYPSGRLHMGH) carry the 'HIGH' region motif. Residues 619–623 (KMSKS) carry the 'KMSKS' region motif. Residue lysine 622 participates in ATP binding.

It belongs to the class-I aminoacyl-tRNA synthetase family.

Its subcellular location is the cytoplasm. The catalysed reaction is tRNA(Leu) + L-leucine + ATP = L-leucyl-tRNA(Leu) + AMP + diphosphate. The protein is Leucine--tRNA ligase of Pectobacterium carotovorum subsp. carotovorum (strain PC1).